The following is a 223-amino-acid chain: MNILIFGPNGSGKGTQGALVKKKYDLAHIESGAIFRQHIGGGTELGKKAKEYIDRGDLVPDDITIPMVLETLKGAGPNGWLLDGFPRNMVQAQKLWDALQAEGLKLDYVIEILLPREVAKNRIMGRRLCKNDNNHPNNIFIDAIKPDGDVCRVCGGSLSARADDQDEGAIGKRHDIYYNTEDGTLAAAYFYKDLAAKGVTKYIELDGEGSIDSIKDTLLKQLA.

10–15 (GSGKGT) contacts ATP. The interval 30–59 (ESGAIFRQHIGGGTELGKKAKEYIDRGDLV) is NMP. Residues serine 31, arginine 36, 57–59 (DLV), 84–87 (GFPR), and glutamine 91 each bind AMP. Residues 125–164 (GRRLCKNDNNHPNNIFIDAIKPDGDVCRVCGGSLSARADD) form an LID region. Arginine 126 is an ATP binding site. Residues arginine 161 and arginine 173 each contribute to the AMP site. Glycine 209 contributes to the ATP binding site.

This sequence belongs to the adenylate kinase family. As to quaternary structure, monomer.

The protein localises to the cytoplasm. The enzyme catalyses AMP + ATP = 2 ADP. The protein operates within purine metabolism; AMP biosynthesis via salvage pathway; AMP from ADP: step 1/1. Its function is as follows. Catalyzes the reversible transfer of the terminal phosphate group between ATP and AMP. Plays an important role in cellular energy homeostasis and in adenine nucleotide metabolism. The chain is Adenylate kinase from Nitratidesulfovibrio vulgaris (strain DSM 19637 / Miyazaki F) (Desulfovibrio vulgaris).